The primary structure comprises 345 residues: N-glycosylase/DNA lyase (345 aa).

Residues N149, R154, and R204 each coordinate DNA. K249 (schiff-base intermediate with DNA) is an active-site residue. Positions 266 and 268 each coordinate 8-oxoguanine. Residues H270 and Q287 each contribute to the DNA site. The 8-oxoguanine site is built by Q315 and F319. Basic and acidic residues predominate over residues 324–334 (RQSRHAQEPPA). Residues 324-345 (RQSRHAQEPPAKRRKGSKGPEG) form a disordered region. The span at 335–345 (KRRKGSKGPEG) shows a compositional bias: basic residues.

This sequence belongs to the type-1 OGG1 family. In terms of tissue distribution, ubiquitous.

The protein resides in the nucleus. It is found in the nucleoplasm. The protein localises to the nucleus speckle. It localises to the nucleus matrix. Its subcellular location is the mitochondrion. The catalysed reaction is 2'-deoxyribonucleotide-(2'-deoxyribose 5'-phosphate)-2'-deoxyribonucleotide-DNA = a 3'-end 2'-deoxyribonucleotide-(2,3-dehydro-2,3-deoxyribose 5'-phosphate)-DNA + a 5'-end 5'-phospho-2'-deoxyribonucleoside-DNA + H(+). Functionally, DNA repair enzyme that incises DNA at 8-oxoG residues. Excises 7,8-dihydro-8-oxoguanine and 2,6-diamino-4-hydroxy-5-N-methylformamidopyrimidine (FAPY) from damaged DNA. Has a beta-lyase activity that nicks DNA 3' to the lesion. This is N-glycosylase/DNA lyase (OGG1) from Homo sapiens (Human).